The following is a 299-amino-acid chain: ATP phosphoribosyltransferase (299 aa).

It belongs to the ATP phosphoribosyltransferase family. Long subfamily. It depends on Mg(2+) as a cofactor.

The protein resides in the cytoplasm. It carries out the reaction 1-(5-phospho-beta-D-ribosyl)-ATP + diphosphate = 5-phospho-alpha-D-ribose 1-diphosphate + ATP. It functions in the pathway amino-acid biosynthesis; L-histidine biosynthesis; L-histidine from 5-phospho-alpha-D-ribose 1-diphosphate: step 1/9. Feedback inhibited by histidine. Its function is as follows. Catalyzes the condensation of ATP and 5-phosphoribose 1-diphosphate to form N'-(5'-phosphoribosyl)-ATP (PR-ATP). Has a crucial role in the pathway because the rate of histidine biosynthesis seems to be controlled primarily by regulation of HisG enzymatic activity. This Shewanella woodyi (strain ATCC 51908 / MS32) protein is ATP phosphoribosyltransferase.